A 53-amino-acid chain; its full sequence is UPF0337 protein LJ_0034.1 (53 aa).

The disordered stretch occupies residues 27–53 (AREVEGKAQQAKGKVKSKATEVKEDLE). Residues 44–53 (KATEVKEDLE) are compositionally biased toward basic and acidic residues.

This sequence belongs to the UPF0337 (CsbD) family.

This Lactobacillus johnsonii (strain CNCM I-12250 / La1 / NCC 533) protein is UPF0337 protein LJ_0034.1.